We begin with the raw amino-acid sequence, 243 residues long: Phosphate-specific transport system accessory protein PhoU (243 aa).

It belongs to the PhoU family. In terms of assembly, homodimer.

Its subcellular location is the cytoplasm. Its function is as follows. Part of the phosphate (Pho) regulon, which plays a key role in phosphate homeostasis. Encoded together with proteins of the phosphate-specific transport (Pst) system in the polycistronic pstSCAB-phoU operon. PhoU is essential for the repression of the Pho regulon at high phosphate conditions. In this role, it may bind, possibly as a chaperone, to PhoR, PhoB or a PhoR-PhoB complex to promote dephosphorylation of phospho-PhoB, or inhibit formation of the PhoR-PhoB transitory complex. This is Phosphate-specific transport system accessory protein PhoU from Serratia marcescens.